The sequence spans 326 residues: Ribosomal large subunit pseudouridine synthase D (326 aa).

One can recognise an S4 RNA-binding domain in the interval 18–91; that stretch reads QRLDQALAEM…IPLDIVYEDE (74 aa). Residue Asp139 is part of the active site.

The protein belongs to the pseudouridine synthase RluA family. In late stage pre-50S ribosomal subunit interacts with ObgE and DarP(YjgA).

It localises to the cytoplasm. It catalyses the reaction uridine(1911/1915/1917) in 23S rRNA = pseudouridine(1911/1915/1917) in 23S rRNA. Responsible for synthesis of pseudouridine from uracil at positions 1911, 1915 and 1917 in 23S ribosomal RNA. Other positions are not modified. Uridine isomerization occurs as a late step during the assembly of the large ribosomal subunit. Member of a network of 50S ribosomal subunit biogenesis factors (ObgE, RluD, RsfS and DarP(YjgA)) which assembles along the 30S-50S interface, allowing 23S rRNA modification and preventing incorrect 23S rRNA structures from forming. This Escherichia coli (strain K12) protein is Ribosomal large subunit pseudouridine synthase D.